We begin with the raw amino-acid sequence, 390 residues long: NADH-quinone oxidoreductase subunit H (390 aa).

9 helical membrane passes run W4–T24, L78–I98, V120–A140, M157–S177, G191–E211, Y247–R266, I278–I298, F315–F337, and W341–L360.

It belongs to the complex I subunit 1 family. NDH-1 is composed of 15 different subunits. Subunits NuoA, H, J, K, L, M, N constitute the membrane sector of the complex.

The protein resides in the cell membrane. The enzyme catalyses a quinone + NADH + 5 H(+)(in) = a quinol + NAD(+) + 4 H(+)(out). NDH-1 shuttles electrons from NADH, via FMN and iron-sulfur (Fe-S) centers, to quinones in the respiratory chain. The immediate electron acceptor for the enzyme in this species is believed to be ubiquinone. Couples the redox reaction to proton translocation (for every two electrons transferred, four hydrogen ions are translocated across the cytoplasmic membrane), and thus conserves the redox energy in a proton gradient. This subunit may bind ubiquinone. This chain is NADH-quinone oxidoreductase subunit H, found in Deinococcus deserti (strain DSM 17065 / CIP 109153 / LMG 22923 / VCD115).